A 294-amino-acid chain; its full sequence is Shikimate dehydrogenase (NADP(+)) (294 aa).

Shikimate is bound by residues 23–25 (SRS) and Thr70. Lys74 serves as the catalytic Proton acceptor. The shikimate site is built by Asn95 and Asp110. Residues 135–139 (GAGGA), 159–164 (NRTASR), and Met232 contribute to the NADP(+) site. Tyr234 serves as a coordination point for shikimate. Gly255 is a binding site for NADP(+).

The protein belongs to the shikimate dehydrogenase family. As to quaternary structure, homodimer.

It carries out the reaction shikimate + NADP(+) = 3-dehydroshikimate + NADPH + H(+). It functions in the pathway metabolic intermediate biosynthesis; chorismate biosynthesis; chorismate from D-erythrose 4-phosphate and phosphoenolpyruvate: step 4/7. Its function is as follows. Involved in the biosynthesis of the chorismate, which leads to the biosynthesis of aromatic amino acids. Catalyzes the reversible NADPH linked reduction of 3-dehydroshikimate (DHSA) to yield shikimate (SA). This Cupriavidus pinatubonensis (strain JMP 134 / LMG 1197) (Cupriavidus necator (strain JMP 134)) protein is Shikimate dehydrogenase (NADP(+)).